We begin with the raw amino-acid sequence, 218 residues long: CTD kinase subunit gamma (218 aa).

The CID domain maps to 2-138 (DPFEGRMTFL…DAMATVEAHE (137 aa)). A disordered region spans residues 137–157 (HEQASKSGDTSTSGAISKNDI). The segment covering 141–152 (SKSGDTSTSGAI) has biased composition (polar residues).

Belongs to the CTK3 family. As to quaternary structure, CTDK-I consists of three subunits, ctk1/lsk1, ctk2/lsc1 and ctk3 (also called alpha, beta and gamma).

The protein localises to the cytoplasm. It localises to the nucleus. Subunit of the CTDK-I complex, which hyperphosphorylates the C-terminal heptapeptide repeat domain (CTD) of the largest RNA polymerase II subunit. As part of the CTDK-I complex, involved in RNA polymerase II transcriptional elongation and pre-mRNA 3'-end processing. Together with ctk2, required for ctk1/lsk1 CTD kinase activation. This Schizosaccharomyces pombe (strain 972 / ATCC 24843) (Fission yeast) protein is CTD kinase subunit gamma.